The chain runs to 350 residues: Probable lactoylglutathione lyase, chloroplastic (350 aa).

A chloroplast-targeting transit peptide spans 1-61; that stretch reads MVRIIPMAAS…KLLRRSVNCL (61 aa). VOC domains follow at residues 88–212 and 218–342; these read RMLH…LLER and PLCQ…FVDN. Residue His-91 coordinates Zn(2+). Arg-95 is a substrate binding site. Glu-142 contributes to the Zn(2+) binding site. Substrate-binding residues include Asn-146 and His-160. Positions 160 and 208 each coordinate Zn(2+). Glu-208 functions as the Proton donor/acceptor in the catalytic mechanism.

Belongs to the glyoxalase I family. It depends on Zn(2+) as a cofactor.

It is found in the plastid. The protein localises to the chloroplast stroma. The enzyme catalyses (R)-S-lactoylglutathione = methylglyoxal + glutathione. It participates in secondary metabolite metabolism; methylglyoxal degradation; (R)-lactate from methylglyoxal: step 1/2. Catalyzes the conversion of hemimercaptal, formed from methylglyoxal and glutathione, to S-lactoylglutathione. This is Probable lactoylglutathione lyase, chloroplastic from Arabidopsis thaliana (Mouse-ear cress).